Here is a 266-residue protein sequence, read N- to C-terminus: DNA damage-regulated autophagy modulator protein 2 (266 aa).

6 helical membrane passes run 8–28 (LSFLPSALVIWTSAAFIFSYI), 53–73 (KCLFGAMLNIAAVLCIATIYV), 88–108 (IIKLNKAGLVLGILSCLGLSI), 118–138 (FAAHVSGAVLTFGMGSLYMFV), 160–180 (LLLVIWCGVSALSMLTCSSVL), and 207–227 (ITTAAEWSMSFSFFGFFLTYI).

It belongs to the DRAM/TMEM150 family. Expression is down-regulated in ovarian tumors (at protein level). Widely expressed with highest levels in placenta and heart. Expressed in the retina. Not detected in brain or thymus.

Its subcellular location is the lysosome membrane. The protein resides in the photoreceptor inner segment. It localises to the apical cell membrane. Plays a role in the initiation of autophagy. In the retina, might be involved in the process of photoreceptor cells renewal and recycling to preserve visual function. Induces apoptotic cell death when coexpressed with DRAM1. The protein is DNA damage-regulated autophagy modulator protein 2 (DRAM2) of Homo sapiens (Human).